A 180-amino-acid polypeptide reads, in one-letter code: Large ribosomal subunit protein uL5 (180 aa).

Belongs to the universal ribosomal protein uL5 family. In terms of assembly, part of the 50S ribosomal subunit; part of the 5S rRNA/L5/L18/L25 subcomplex. Contacts the 5S rRNA and the P site tRNA. Forms a bridge to the 30S subunit in the 70S ribosome.

This is one of the proteins that bind and probably mediate the attachment of the 5S RNA into the large ribosomal subunit, where it forms part of the central protuberance. In the 70S ribosome it contacts protein S13 of the 30S subunit (bridge B1b), connecting the 2 subunits; this bridge is implicated in subunit movement. Contacts the P site tRNA; the 5S rRNA and some of its associated proteins might help stabilize positioning of ribosome-bound tRNAs. The sequence is that of Large ribosomal subunit protein uL5 from Streptococcus pyogenes serotype M49 (strain NZ131).